The sequence spans 802 residues: Copper-exporting P-type ATPase (802 aa).

2 HMA domains span residues 5 to 71 (KEIA…YHVV) and 73 to 139 (EKAE…YKLK). Cysteine 16, cysteine 19, cysteine 84, and cysteine 87 together coordinate Cu(+). Helical transmembrane passes span 162–181 (LIFSAVLSFPLLWAMVSHFT), 196–218 (WMQFALATPVQFLIGWPFYVGAY), 230–249 (VLVALGTTAAYAYSLYLTFQ), 259–278 (GLYYETSAILLTLILLGKLF), 412–434 (ISGIFVPIVLGIAVLTFLIWYLW), and 447–469 (FIAVLVIACPCALGLATPTSIMA). The active-site 4-aspartylphosphate intermediate is aspartate 499. Mg(2+)-binding residues include aspartate 698 and aspartate 702. 2 helical membrane-spanning segments follow: residues 756–775 (LFWALGYNSLGIPIAALGFL) and 779–796 (IAGAAMAFSSVSVVLNAL).

This sequence belongs to the cation transport ATPase (P-type) (TC 3.A.3) family. Type IB subfamily. Monomer at sub-stoichiometric copper concentrations. Homodimer at higher copper concentrations. Forms a heterodimer (electrostatic interactions) with CopZ during the transfer of Cu(+).

Its subcellular location is the cell membrane. It carries out the reaction Cu(+)(in) + ATP + H2O = Cu(+)(out) + ADP + phosphate + H(+). Its function is as follows. Involved in copper export. This chain is Copper-exporting P-type ATPase (copA), found in Bacillus subtilis (strain 168).